The following is a 215-amino-acid chain: Peptide methionine sulfoxide reductase MsrA (215 aa).

C58 is an active-site residue.

This sequence belongs to the MsrA Met sulfoxide reductase family.

The enzyme catalyses L-methionyl-[protein] + [thioredoxin]-disulfide + H2O = L-methionyl-(S)-S-oxide-[protein] + [thioredoxin]-dithiol. The catalysed reaction is [thioredoxin]-disulfide + L-methionine + H2O = L-methionine (S)-S-oxide + [thioredoxin]-dithiol. In terms of biological role, has an important function as a repair enzyme for proteins that have been inactivated by oxidation. Catalyzes the reversible oxidation-reduction of methionine sulfoxide in proteins to methionine. This is Peptide methionine sulfoxide reductase MsrA from Pseudomonas aeruginosa (strain LESB58).